The chain runs to 1481 residues: MQRSPLEKASVVSKLFFSWTRPILKKGYRQRLELSDIYQIPSADSADNLSEKLEREWDRELASKKNPKLINALRRCFFWRFTFYGILLYLGEVTKAVQPLLLGRIIASYDPDNKTERSIAIYLGIGLCLLFIVRTLLLHPAIFGLHHIGMQMRIAMFSLIYKKTLKLSSRVLDKISIGQLVSLLSNNLNKFDEGLALAHFVWIAPLQVALLMGLIWELLQASAFCGLGFLIVLALFQAGLGRMMMKYRDQRAGKINERLVITSEMIENIQSVKAYCWEEAMEKIIENLRQTELKLTRKAAYVRYFNSSAFFFSGFFVVFLSVLPYALIKGIVLRKIFTTISFCIVLRMAVTRQFPWAVQTWYDSLGAINKIQDFLQKQEYKTLEYNLTTTEVVMENVTAFWEEGFGELFEKAKQNNNNRKASNGDDNLFFSNFSLLGTPVLKDINFKIERGQLLAVAGSTGAGKTSLLMMIMGELEPSEGKIKHSGRISFCSQFSWIMPGTIKENIIFGVSYDEYRYRSVIKACQLEEDISKFAEKDNIVLGEGGITLSGGQRARISLARAVYKDADLYLLDSPFGYLDVLTEKEIFESCVCKLMANKTRILVTSKMEHLKKADKILILHEGSSYFYGTFSELQNLRPDFSSKLMGYDSFDQFSSERRNSILTETLRRFSLEGDAPVSWTETKKQSFKQTGEFGEKRKNSILNSINSIRKFSIVQKTPLQMNGIEEDSDEPLERRLSLVPDSEQGEAILPRISMINTGPALQVRRRQSVLNMMTHSVNQGQSVHRKTTASTRKVSLAPQANLTELDIYSRRLSQETGLEISEEINEEDLKECFFDDMESIPAVTTWNTYLRYITLHKSLIFVLIWCLVIFLAEVAASLVVLWLLGNTPFQDKGNSTYSRNNSYAVIITNTSSYYVFYIYVGVADTLLALGFFRGLPLVHTLITVSKMLHHKMLHSVLQAPMSTLNTLKAGGILNRFSKDIAILDDLLPLTIFDFIQLLLIVIGAIAVVSVLQPYIFLATVPVIAAFILLRAYFLQTSQQLKQLESAGRSPIFTHLVTSLKGLWTLRAFGRQPYFETLFHKALNLHTANWFLYLSTLRWFQMRIEMIFVIFFIAVTFISILTTGEGEGTVGIILTLAMNIMSTLQWAVNSSIDVDSLMRSVSRVFKFIDMPTEEGKPTKSTKAYRNGQLSKVMIIENSHVKKDDIWPSGGQMTIKDLTAKYIEGGNAILENISFSISPGQRVGLLGRTGSGKSTLLSAFLRLLNTEGEIQIDGVSWDSITLQQWRKAFGVIPQKVFIFTGTFRKNLDPYEQWSDQEIWKVADEVGLRSVIEQFPGKLDFVLVDGGCVLSHGHKQLMCLARSVLSKAKILLLDEPSAHLDPVTYQIIRRALKQAFADCTVILCEHRIEAMLECQQFLVIEENKVRQYDSIQKLLNEKSLFRQAISHSDRVKLFPHRNSSKYKSQPQIASLKEETEEEVQETRL.

Over 1 to 77 (MQRSPLEKAS…KLINALRRCF (77 aa)) the chain is Cytoplasmic. A helical transmembrane segment spans residues 78–98 (FWRFTFYGILLYLGEVTKAVQ). The 285-residue stretch at 81–365 (FTFYGILLYL…WAVQTWYDSL (285 aa)) folds into the ABC transmembrane type-1 1 domain. The Extracellular segment spans residues 99 to 122 (PLLLGRIIASYDPDNKTERSIAIY). The chain crosses the membrane as a helical span at residues 123–146 (LGIGLCLLFIVRTLLLHPAIFGLH). Topologically, residues 147-195 (HIGMQMRIAMFSLIYKKTLKLSSRVLDKISIGQLVSLLSNNLNKFDEGL) are cytoplasmic. Residues 196-216 (ALAHFVWIAPLQVALLMGLIW) form a helical membrane-spanning segment. At 217 to 222 (ELLQAS) the chain is on the extracellular side. Residues 223–243 (AFCGLGFLIVLALFQAGLGRM) traverse the membrane as a helical segment. Residues 244-298 (MMKYRDQRAGKINERLVITSEMIENIQSVKAYCWEEAMEKIIENLRQTELKLTRK) are Cytoplasmic-facing. Residues 299 to 319 (AAYVRYFNSSAFFFSGFFVVF) traverse the membrane as a helical segment. At 320 to 339 (LSVLPYALIKGIVLRKIFTT) the chain is on the extracellular side. Residues 340-358 (ISFCIVLRMAVTRQFPWAV) form a helical membrane-spanning segment. At 359-858 (QTWYDSLGAI…YLRYITLHKS (500 aa)) the chain is on the cytoplasmic side. Residues W401, S434, 458-465 (GSTGAGKT), and Q493 each bind ATP. Residues 423-646 (NGDDNLFFSN…RPDFSSKLMG (224 aa)) enclose the ABC transporter 1 domain. C524 carries S-palmitoyl cysteine lipidation. Phosphoserine is present on residues S549 and S660. The tract at residues 654–831 (SSERRNSILT…EEINEEDLKE (178 aa)) is disordered R region. S670 is subject to Phosphoserine; by PKA. S686 is modified (phosphoserine). K688 is covalently cross-linked (Glycyl lysine isopeptide (Lys-Gly) (interchain with G-Cter in ubiquitin)). A phosphoserine mark is found at S700 and S712. T717 bears the Phosphothreonine mark. A phosphoserine mark is found at S737, S753, S768, S790, S795, and S813. The helical transmembrane segment at 859–879 (LIFVLIWCLVIFLAEVAASLV) threads the bilayer. The ABC transmembrane type-1 2 domain occupies 859–1155 (LIFVLIWCLV…AVNSSIDVDS (297 aa)). The Extracellular segment spans residues 880–918 (VLWLLGNTPFQDKGNSTYSRNNSYAVIITNTSSYYVFYI). 3 N-linked (GlcNAc...) asparagine glycosylation sites follow: N894, N900, and N909. Residues 919-939 (YVGVADTLLALGFFRGLPLVH) form a discontinuously helical membrane-spanning segment. Residues 940–990 (TLITVSKMLHHKMLHSVLQAPMSTLNTLKAGGILNRFSKDIAILDDLLPLT) lie on the Cytoplasmic side of the membrane. The chain crosses the membrane as a helical span at residues 991-1011 (IFDFIQLLLIVIGAIAVVSVL). Topologically, residues 1012-1013 (QP) are extracellular. The chain crosses the membrane as a helical span at residues 1014 to 1034 (YIFLATVPVIAAFILLRAYFL). The Cytoplasmic portion of the chain corresponds to 1035–1095 (QTSQQLKQLE…TANWFLYLST (61 aa)). A helical membrane pass occupies residues 1096 to 1116 (LRWFQMRIEMIFVIFFIAVTF). Topologically, residues 1117–1130 (ISILTTGEGEGTVG) are extracellular. Residues 1131–1151 (IILTLAMNIMSTLQWAVNSSI) form a helical membrane-spanning segment. Over 1152-1481 (DVDSLMRSVS…TEEEVQETRL (330 aa)) the chain is Cytoplasmic. Positions 1211-1444 (MTIKDLTAKY…KSLFRQAISH (234 aa)) constitute an ABC transporter 2 domain. ATP contacts are provided by residues Y1220 and 1245–1252 (GRTGSGKS). The interaction with GORASP2 stretch occupies residues 1387-1481 (RALKQAFADC…TEEEVQETRL (95 aa)). Residue C1396 is the site of S-palmitoyl cysteine attachment. S1445 and S1457 each carry phosphoserine. The interval 1453-1481 (HRNSSKYKSQPQIASLKEETEEEVQETRL) is disordered. Positions 1471 to 1481 (ETEEEVQETRL) are enriched in acidic residues. The PDZ-binding signature appears at 1479–1481 (TRL).

The protein belongs to the ABC transporter superfamily. ABCC family. CFTR transporter (TC 3.A.1.202) subfamily. Monomer; does not require oligomerization for channel activity. May form oligomers in the membrane. Interacts with SLC26A3, SLC26A6 and NHERF1. Interacts with SHANK2. Interacts with MYO6. Interacts (via C-terminus) with GOPC (via PDZ domain); this promotes CFTR internalization and thereby decreases channel activity. Interacts with SLC4A7 through NHERF1. Found in a complex with MYO5B and RAB11A. Interacts with ANO1. Interacts with SLC26A8. Interacts with AHCYL1; the interaction increases CFTR activity. Interacts with CSE1L. The core-glycosylated form interacts with GORASP2 (via PDZ GRASP-type 1 domain) in respone to ER stress. Interacts with MARCHF2; the interaction leads to CFTR ubiqtuitination and degradation. Interacts with ADGRG2. Post-translationally, N-glycosylated. Phosphorylated; cAMP treatment promotes phosphorylation and activates the channel. Dephosphorylation decreases the ATPase activity (in vitro). Phosphorylation at PKA sites activates the channel. Phosphorylation at PKC sites enhances the response to phosphorylation by PKA. Phosphorylated by AMPK; this inhibits channel activity. In terms of processing, ubiquitinated, leading to its degradation in the lysosome. Deubiquitination by USP10 in early endosomes enhances its endocytic recycling to the cell membrane. Ubiquitinated by RNF185 during ER stress. Ubiquitinated by MARCHF2.

It localises to the apical cell membrane. Its subcellular location is the early endosome membrane. The protein resides in the cell membrane. The protein localises to the recycling endosome membrane. It is found in the endoplasmic reticulum membrane. It localises to the nucleus. The catalysed reaction is ATP + H2O + closed Cl(-) channel = ADP + phosphate + open Cl(-) channel.. It catalyses the reaction chloride(in) = chloride(out). It carries out the reaction hydrogencarbonate(in) = hydrogencarbonate(out). The enzyme catalyses ATP + H2O = ADP + phosphate + H(+). Its function is as follows. Epithelial ion channel that plays an important role in the regulation of epithelial ion and water transport and fluid homeostasis. Mediates the transport of chloride ions across the cell membrane. Possesses an intrinsic ATPase activity and utilizes ATP to gate its channel; the passive flow of anions through the channel is gated by cycles of ATP binding and hydrolysis by the ATP-binding domains. The ion channel is also permeable to HCO(3)(-); selectivity depends on the extracellular chloride concentration. Exerts its function also by modulating the activity of other ion channels and transporters. Contributes to the regulation of the pH and the ion content of the epithelial fluid layer. Modulates the activity of the epithelial sodium channel (ENaC) complex, in part by regulating the cell surface expression of the ENaC complex. May regulate bicarbonate secretion and salvage in epithelial cells by regulating the transporter SLC4A7. Can inhibit the chloride channel activity of ANO1. Plays a role in the chloride and bicarbonate homeostasis during sperm epididymal maturation and capacitation. The polypeptide is Cystic fibrosis transmembrane conductance regulator (Aotus nancymaae (Ma's night monkey)).